Here is a 326-residue protein sequence, read N- to C-terminus: Adenosine receptor A1 (326 aa).

At 1–10 (MPPSISAFQA) the chain is on the extracellular side. The helical transmembrane segment at 11-33 (AYIGIEVLIALVSVPGNVLVIWA) threads the bilayer. The Cytoplasmic segment spans residues 34–46 (VKVNQALRDATFC). Residues 47 to 69 (FIVSLAVADVAVGALVIPLAILI) traverse the membrane as a helical segment. Residues 70–80 (NIGPRTYFHTC) lie on the Extracellular side of the membrane. A disulfide bond links C80 and C169. The chain crosses the membrane as a helical span at residues 81 to 102 (LKVACPVLILTQSSILALLAIA). The Cytoplasmic segment spans residues 103–123 (VDRYLRVKIPLRYKTVVTPRR). Residues 124 to 146 (AVVAITGCWILSFVVGLTPMFGW) form a helical membrane-spanning segment. Residues 147–176 (NNLSAVERDWLANGSVGEPVIECQFEKVIS) lie on the Extracellular side of the membrane. N-linked (GlcNAc...) asparagine glycosylation is found at N148 and N159. A helical transmembrane segment spans residues 177-201 (MEYMVYFNFFVWVLPPLLLMVLIYM). Residues 202–235 (EVFYLIRKQLNKKVSASSGDPQKYYGKELKIAKS) lie on the Cytoplasmic side of the membrane. Residues 236 to 259 (LALILFLFALSWLPLHILNCITLF) traverse the membrane as a helical segment. At 260 to 267 (CPSCHMPR) the chain is on the extracellular side. Residues 268 to 292 (ILIYIAIFLSHGNSAMNPIVYAFRI) form a helical membrane-spanning segment. Residues 293–326 (QKFRVTFLKIWNDHFRCQPAPPVDEDAPAERPDD) lie on the Cytoplasmic side of the membrane. C309 carries S-palmitoyl cysteine lipidation.

Belongs to the G-protein coupled receptor 1 family.

It localises to the cell membrane. Receptor for adenosine. The activity of this receptor is mediated by G proteins which inhibit adenylyl cyclase. The sequence is that of Adenosine receptor A1 (ADORA1) from Bos taurus (Bovine).